Reading from the N-terminus, the 105-residue chain is Translation initiation factor 1A (105 aa).

An S1-like domain is found at 18-92 (IRVKLPNKRI…DKCDIIYRYT (75 aa)).

This sequence belongs to the eIF-1A family.

Its function is as follows. Seems to be required for maximal rate of protein biosynthesis. Enhances ribosome dissociation into subunits and stabilizes the binding of the initiator Met-tRNA(I) to 40 S ribosomal subunits. This chain is Translation initiation factor 1A (eIF1A), found in Methanocorpusculum labreanum (strain ATCC 43576 / DSM 4855 / Z).